The following is a 513-amino-acid chain: MKQHLVIFDTTLRDGEQSPGASMTKEEKIRVARQLEKMRVDVIEAGFAAASPGDFDAIHSIAQTIKDSTVCSLARANENDIRRAGEAIKPAQSGRIHTFIATSPIHMEKKLRMTPDQVVEQAVKAIGWAREYTDDIEFSAEDAGRSDLDFLCRIFEEVIKAGATTINVPDTVGYNIPSQYAETMRQLIERVPNSDKVVWSVHCHNDLGLAVSNSLAAVLCGARQVECTINGLGERAGNAALEEIVMAVRTRADVFPVETRIDTTQIVPASKLVSQITGYPVQPNKAVVGANAFAHESGIHQDGVLKHRETYEIMRAQDVGWTQNKLVLGKHSGRNAFKNRLQELGIELESDEALNAAFARFKELADKKHEIFDEDLHALVSDDLVTPDQEYYKLVYSRVCSETGEMPRASVILNIGGVEHKAEADGGGPVDATFKAIESIAGSGAELLLYSVNAITTGTDAQGEVTTRLSKGDRIVNGNGADTDIVIASARSYLNALNKLHSTLDKVKAQGGV.

In terms of domain architecture, Pyruvate carboxyltransferase spans 5–267 (LVIFDTTLRD…ETRIDTTQIV (263 aa)). Mn(2+) is bound by residues Asp-14, His-202, His-204, and Asn-238. The interval 393–513 (KLVYSRVCSE…LDKVKAQGGV (121 aa)) is regulatory domain.

The protein belongs to the alpha-IPM synthase/homocitrate synthase family. LeuA type 1 subfamily. In terms of assembly, homodimer. The cofactor is Mn(2+).

The protein resides in the cytoplasm. The catalysed reaction is 3-methyl-2-oxobutanoate + acetyl-CoA + H2O = (2S)-2-isopropylmalate + CoA + H(+). It functions in the pathway amino-acid biosynthesis; L-leucine biosynthesis; L-leucine from 3-methyl-2-oxobutanoate: step 1/4. Catalyzes the condensation of the acetyl group of acetyl-CoA with 3-methyl-2-oxobutanoate (2-ketoisovalerate) to form 3-carboxy-3-hydroxy-4-methylpentanoate (2-isopropylmalate). The protein is 2-isopropylmalate synthase of Dechloromonas aromatica (strain RCB).